The following is a 110-amino-acid chain: Large ribosomal subunit protein P2 (110 aa).

Residues 63 to 110 (ASVPSGGGVAAAAPAAGGGGADPAEAKEEKKEEPEEESDDDMGFGLFD) are disordered. The span at 86-95 (AEAKEEKKEE) shows a compositional bias: basic and acidic residues.

This sequence belongs to the eukaryotic ribosomal protein P1/P2 family. P1 and P2 exist as dimers at the large ribosomal subunit. Post-translationally, phosphorylated.

Its function is as follows. Plays an important role in the elongation step of protein synthesis. This is Large ribosomal subunit protein P2 from Cryptochiton stelleri (Giant gumboot chiton).